The primary structure comprises 312 residues: Ribosomal protein uL3 glutamine methyltransferase (312 aa).

The protein belongs to the protein N5-glutamine methyltransferase family. PrmB subfamily.

The catalysed reaction is L-glutaminyl-[ribosomal protein uL3] + S-adenosyl-L-methionine = N(5)-methyl-L-glutaminyl-[ribosomal protein uL3] + S-adenosyl-L-homocysteine + H(+). In terms of biological role, methylates large ribosomal subunit protein uL3 on a specific glutamine residue. This Xylella fastidiosa (strain 9a5c) protein is Ribosomal protein uL3 glutamine methyltransferase.